A 102-amino-acid polypeptide reads, in one-letter code: Small ribosomal subunit protein uS10 (102 aa).

This sequence belongs to the universal ribosomal protein uS10 family. Part of the 30S ribosomal subunit.

In terms of biological role, involved in the binding of tRNA to the ribosomes. The chain is Small ribosomal subunit protein uS10 from Methanosphaerula palustris (strain ATCC BAA-1556 / DSM 19958 / E1-9c).